Here is a 239-residue protein sequence, read N- to C-terminus: Methylthioribulose-1-phosphate dehydratase (239 aa).

Substrate is bound at residue Cys-94. Zn(2+) contacts are provided by His-112 and His-114. Glu-136 (proton donor/acceptor) is an active-site residue. His-192 serves as a coordination point for Zn(2+).

Belongs to the aldolase class II family. MtnB subfamily. Zn(2+) serves as cofactor.

It localises to the cytoplasm. It carries out the reaction 5-(methylsulfanyl)-D-ribulose 1-phosphate = 5-methylsulfanyl-2,3-dioxopentyl phosphate + H2O. The protein operates within amino-acid biosynthesis; L-methionine biosynthesis via salvage pathway; L-methionine from S-methyl-5-thio-alpha-D-ribose 1-phosphate: step 2/6. Catalyzes the dehydration of methylthioribulose-1-phosphate (MTRu-1-P) into 2,3-diketo-5-methylthiopentyl-1-phosphate (DK-MTP-1-P). Functions in the methionine salvage pathway. May play a role in apoptosis. The protein is Methylthioribulose-1-phosphate dehydratase of Aquarana catesbeiana (American bullfrog).